The primary structure comprises 138 residues: Large ribosomal subunit protein uL16 (138 aa).

Basic residues predominate over residues 1–21 (MLIPRKVKHRKQHHPSLRGRA). The segment at 1-22 (MLIPRKVKHRKQHHPSLRGRAK) is disordered.

Belongs to the universal ribosomal protein uL16 family. In terms of assembly, part of the 50S ribosomal subunit.

Functionally, binds 23S rRNA and is also seen to make contacts with the A and possibly P site tRNAs. The sequence is that of Large ribosomal subunit protein uL16 from Thermobifida fusca (strain YX).